We begin with the raw amino-acid sequence, 136 residues long: Small ribosomal subunit protein uS9 (136 aa).

The segment at Thr-111–Arg-136 is disordered. Positions Lys-117–Arg-136 are enriched in basic residues.

It belongs to the universal ribosomal protein uS9 family.

The polypeptide is Small ribosomal subunit protein uS9 (Methylacidiphilum infernorum (isolate V4) (Methylokorus infernorum (strain V4))).